We begin with the raw amino-acid sequence, 162 residues long: Caveolin-2 (162 aa).

Residues 1-86 lie on the Cytoplasmic side of the membrane; the sequence is MGLETEKADV…FEISKYVMYK (86 aa). A Phosphotyrosine; by SRC modification is found at Tyr19. Residues Ser20 and Ser23 each carry the phosphoserine modification. Position 27 is a phosphotyrosine; by SRC (Tyr27). The residue at position 36 (Ser36) is a Phosphoserine. The helical intramembrane region spans 87–107; sequence FLTVFLAIPLAFIAGILFATL. Topologically, residues 108-162 are cytoplasmic; sequence SCLHIWILMPFVKTCLMVLPSVQTIWKSVTDVIIAPLCTSVGRCFSSVSLQLSQD.

Belongs to the caveolin family. In terms of assembly, monomer or homodimer. Interacts with CAV1; the interaction forms a stable heterooligomeric complex that is required for targeting to lipid rafts and for caveolae formation. Tyrosine phosphorylated forms do not form heterooligomers with the Tyr-19-phosphorylated form existing as a monomer or dimer, and the Tyr-27-form as a monomer only. Interacts (tyrosine phosphorylated form) with the SH2 domain-containing proteins, RASA1, NCK1 and SRC. Interacts (tyrosine phosphorylated form) with INSR, the interaction (Tyr-27-phosphorylated form) is increased on insulin stimulation. Interacts (Tyr-19 phosphorylated form) with MAPK1 (phosphorylated form); the interaction, promoted by insulin, leads to nuclear location and MAPK1 activation. Interacts with STAT3; the interaction is increased on insulin-induced tyrosine phosphorylation leading to STAT activation. Post-translationally, phosphorylated on serine and tyrosine residues. CAV1 promotes phosphorylation on Ser-23 which then targets the complex to the plasma membrane, lipid rafts and caveolae. Phosphorylation on Ser-36 appears to modulate mitosis in endothelial cells. Phosphorylation on both Tyr-19 and Tyr-27 is required for insulin-induced 'Ser-727' phosphorylation of STAT3 and its activation. Phosphorylation on Tyr-19 is required for insulin-induced phosphorylation of MAPK1 and DNA binding of STAT3. Tyrosine phosphorylation is induced by both EGF and insulin (By. similarity).

The protein resides in the nucleus. The protein localises to the cytoplasm. It localises to the golgi apparatus membrane. It is found in the cell membrane. Its subcellular location is the membrane. The protein resides in the caveola. May act as a scaffolding protein within caveolar membranes. Interacts directly with G-protein alpha subunits and can functionally regulate their activity. Acts as an accessory protein in conjunction with CAV1 in targeting to lipid rafts and driving caveolae formation. The Ser-36 phosphorylated form has a role in modulating mitosis in endothelial cells. Positive regulator of cellular mitogenesis of the MAPK signaling pathway. Required for the insulin-stimulated nuclear translocation and activation of MAPK1 and STAT3, and the subsequent regulation of cell cycle progression. The protein is Caveolin-2 (CAV2) of Gorilla gorilla gorilla (Western lowland gorilla).